The chain runs to 183 residues: Oligoribonuclease (183 aa).

The Exonuclease domain maps to 8–171; sequence LIWLDLEMTG…QDIRDSIEEL (164 aa). Tyr129 is an active-site residue.

This sequence belongs to the oligoribonuclease family.

Its subcellular location is the cytoplasm. Its function is as follows. 3'-to-5' exoribonuclease specific for small oligoribonucleotides. This chain is Oligoribonuclease, found in Coxiella burnetii (strain RSA 493 / Nine Mile phase I).